Reading from the N-terminus, the 397-residue chain is 1-deoxy-D-xylulose 5-phosphate reductoisomerase (397 aa).

Residues threonine 10, glycine 11, serine 12, isoleucine 13, glycine 36, asparagine 38, and asparagine 124 each contribute to the NADPH site. Lysine 125 contributes to the 1-deoxy-D-xylulose 5-phosphate binding site. Glutamate 126 is a binding site for NADPH. Aspartate 150 contributes to the Mn(2+) binding site. 1-deoxy-D-xylulose 5-phosphate-binding residues include serine 151, glutamate 152, serine 186, and histidine 209. Mn(2+) is bound at residue glutamate 152. Position 215 (glycine 215) interacts with NADPH. 1-deoxy-D-xylulose 5-phosphate contacts are provided by serine 222, asparagine 227, lysine 228, and glutamate 231. Glutamate 231 is a binding site for Mn(2+).

Belongs to the DXR family. It depends on Mg(2+) as a cofactor. The cofactor is Mn(2+).

It carries out the reaction 2-C-methyl-D-erythritol 4-phosphate + NADP(+) = 1-deoxy-D-xylulose 5-phosphate + NADPH + H(+). It participates in isoprenoid biosynthesis; isopentenyl diphosphate biosynthesis via DXP pathway; isopentenyl diphosphate from 1-deoxy-D-xylulose 5-phosphate: step 1/6. In terms of biological role, catalyzes the NADPH-dependent rearrangement and reduction of 1-deoxy-D-xylulose-5-phosphate (DXP) to 2-C-methyl-D-erythritol 4-phosphate (MEP). This Photobacterium profundum (strain SS9) protein is 1-deoxy-D-xylulose 5-phosphate reductoisomerase.